We begin with the raw amino-acid sequence, 292 residues long: 5,10-methylenetetrahydrofolate reductase (292 aa).

Glu-26 (proton donor/acceptor) is an active-site residue. Thr-57 is a binding site for NADH. Residues Tyr-58, Ala-60, His-86, Arg-116, Gly-117, Asp-118, Ala-130, Tyr-150, His-154, Ala-157, Asp-163, Asn-166, Arg-169, and Lys-170 each contribute to the FAD site. Residue Asp-118 coordinates (6S)-5-methyl-5,6,7,8-tetrahydrofolate. Gln-181 is an NADH binding site. Gln-181, Gln-217, and Arg-277 together coordinate (6S)-5-methyl-5,6,7,8-tetrahydrofolate.

The protein belongs to the methylenetetrahydrofolate reductase family. FAD is required as a cofactor.

The enzyme catalyses (6S)-5-methyl-5,6,7,8-tetrahydrofolate + NAD(+) = (6R)-5,10-methylene-5,6,7,8-tetrahydrofolate + NADH + H(+). The protein operates within one-carbon metabolism; tetrahydrofolate interconversion. It participates in amino-acid biosynthesis; L-methionine biosynthesis via de novo pathway. Its function is as follows. Catalyzes the NADH-dependent reduction of 5,10-methylenetetrahydrofolate to 5-methyltetrahydrofolate. Is required to provide the methyl group necessary for methionine synthetase to convert homocysteine to methionine; the methyl group is given by 5-methyltetrahydrofolate. The protein is 5,10-methylenetetrahydrofolate reductase (metF) of Neisseria meningitidis serogroup B (strain ATCC BAA-335 / MC58).